Consider the following 137-residue polypeptide: Interferon-induced transmembrane protein 3 (137 aa).

At 1–57 the chain is on the cytoplasmic side; that stretch reads MNHTSQAFITAASGGQPPNYERIKEEYEVAEMGAPHGSASVRTTVINMPREVSVPDH. The residue at position 20 (Y20) is a Phosphotyrosine. K24 is covalently cross-linked (Glycyl lysine isopeptide (Lys-Gly) (interchain with G-Cter in ubiquitin)). Phosphotyrosine is present on Y27. Positions 58–78 form an intramembrane region, helical; it reads VVWSLFNTLFMNFCCLGFIAY. The tract at residues 60–93 is interaction with SPP1; the sequence is WSLFNTLFMNFCCLGFIAYAYSVKSRDRKMVGDV. Residues C71 and C72 are each lipidated (S-palmitoyl cysteine). The Cytoplasmic portion of the chain corresponds to 79 to 109; it reads AYSVKSRDRKMVGDVTGAQAYASTAKCLNIS. Glycyl lysine isopeptide (Lys-Gly) (interchain with G-Cter in ubiquitin) cross-links involve residues K83, K88, and K104. C105 carries the S-palmitoyl cysteine lipid modification. The segment at 108–133 is interaction with VAPA; it reads ISTLVLSILMVVITIVSVIIIVLNAQ. The chain crosses the membrane as a helical span at residues 110-130; it reads TLVLSILMVVITIVSVIIIVL. The Extracellular portion of the chain corresponds to 131-137; sequence NAQNLHT.

It belongs to the CD225/Dispanin family. In terms of assembly, interacts with ATP6V0B. Interacts with CD81. Interacts with SPP1; the interaction reduces OPN expression. Interacts with BRI3. In terms of processing, polyubiquitinated with both 'Lys-48' and 'Lys-63' linkages. Ubiquitination negatively regulates antiviral activity. Lys-24 is the most prevalent ubiquitination site. Post-translationally, phosphorylation at Tyr-20 is required for endosomal and lysosomal location. Expressed in acinar cell. Predominantly expressed in nascent primordial germ cells, as well as in gonadal germ cells.

It is found in the cell membrane. Its subcellular location is the late endosome membrane. It localises to the early endosome membrane. The protein resides in the lysosome membrane. The protein localises to the cytoplasm. It is found in the perinuclear region. In terms of biological role, IFN-induced antiviral protein which disrupts intracellular cholesterol homeostasis. Inhibits the entry of viruses to the host cell cytoplasm by preventing viral fusion with cholesterol depleted endosomes. May inactivate new enveloped viruses which buds out of the infected cell, by letting them go out with a cholesterol depleted membrane. Active against multiple viruses, including influenza A virus, SARS coronaviruses (SARS-CoV and SARS-CoV-2), Marburg virus (MARV), Ebola virus (EBOV), Dengue virus (DNV), West Nile virus (WNV), human immunodeficiency virus type 1 (HIV-1), hepatitis C virus (HCV) and vesicular stomatitis virus (VSV). Can inhibit: influenza virus hemagglutinin protein-mediated viral entry, MARV and EBOV GP1,2-mediated viral entry, SARS-CoV and SARS-CoV-2 S protein-mediated viral entry and VSV G protein-mediated viral entry. Plays a critical role in the structural stability and function of vacuolar ATPase (v-ATPase). Establishes physical contact with the v-ATPase of endosomes which is critical for proper clathrin localization and is also required for the function of the v-ATPase to lower the pH in phagocytic endosomes thus establishing an antiviral state. In hepatocytes, IFITM proteins act in a coordinated manner to restrict HCV infection by targeting the endocytosed HCV virion for lysosomal degradation. IFITM2 and IFITM3 display anti-HCV activity that may complement the anti-HCV activity of IFITM1 by inhibiting the late stages of HCV entry, possibly in a coordinated manner by trapping the virion in the endosomal pathway and targeting it for degradation at the lysosome. Exerts opposing activities on SARS-CoV-2, including amphipathicity-dependent restriction of virus at endosomes and amphipathicity-independent enhancement of infection at the plasma membrane. The polypeptide is Interferon-induced transmembrane protein 3 (Mus musculus (Mouse)).